Here is a 316-residue protein sequence, read N- to C-terminus: Pantothenate kinase (316 aa).

95-102 (GSVAVGKS) serves as a coordination point for ATP.

The protein belongs to the prokaryotic pantothenate kinase family.

The protein resides in the cytoplasm. It catalyses the reaction (R)-pantothenate + ATP = (R)-4'-phosphopantothenate + ADP + H(+). Its pathway is cofactor biosynthesis; coenzyme A biosynthesis; CoA from (R)-pantothenate: step 1/5. This chain is Pantothenate kinase, found in Salmonella agona (strain SL483).